The primary structure comprises 253 residues: Mediator of RNA polymerase II transcription subunit 10 (253 aa).

Disordered stretches follow at residues 32–63, 88–109, and 206–253; these read YDTN…HASS, LPSS…TELE, and VEAT…QSGQ. Positions 34–47 are enriched in low complexity; sequence TNPSSSNNNTPTSS. Gly residues predominate over residues 50 to 60; sequence SGGGGGGGGGH. Over residues 88-104 the composition is skewed to low complexity; sequence LPSSPSSGPSNNQPQQG. Positions 231-253 are enriched in gly residues; sequence SAGGEGQQGQGQGQQGQGQQSGQ.

This sequence belongs to the Mediator complex subunit 10 family. In terms of assembly, component of the Mediator complex.

The protein resides in the nucleus. Functionally, component of the Mediator complex, a coactivator involved in the regulated transcription of nearly all RNA polymerase II-dependent genes. Mediator functions as a bridge to convey information from gene-specific regulatory proteins to the basal RNA polymerase II transcription machinery. Mediator is recruited to promoters by direct interactions with regulatory proteins and serves as a scaffold for the assembly of a functional preinitiation complex with RNA polymerase II and the general transcription factors. The polypeptide is Mediator of RNA polymerase II transcription subunit 10 (nut2) (Neurospora crassa (strain ATCC 24698 / 74-OR23-1A / CBS 708.71 / DSM 1257 / FGSC 987)).